Consider the following 253-residue polypeptide: Chemokine-binding protein (253 aa).

Positions M1–M17 are cleaved as a signal peptide. The disordered stretch occupies residues T62–P87. Residues T65–D86 show a composition bias toward acidic residues.

This sequence belongs to the orthopoxvirus OPG001 family. Binds to host CC chemokines, such as RANTES/CCL5, MIP-1alpha/CCL3, MCP-1/CCL2 and eotaxin.

The protein resides in the secreted. Inhibits host immune defense by binding to host chemokines. Binds host CC chemokines (beta chemokines) such as RANTES with high affinity, but not CXC or C chemokines (alpha and gamma chemokines). The protein is Chemokine-binding protein (OPG001) of Variola virus (isolate Human/India/Ind3/1967) (VARV).